The primary structure comprises 302 residues: Alpha-ketoglutarate-dependent dioxygenase alkB homolog 4 (302 aa).

The residue at position 2 (Ala-2) is an N-acetylalanine. Position 8 is a phosphothreonine (Thr-8). One can recognise a Fe2OG dioxygenase domain in the interval 150–274 (PVEQCNLDYC…RVCVTFRELS (125 aa)). 3 residues coordinate Fe cation: His-169, Asp-171, and His-254. Arg-265 contacts 2-oxoglutarate.

The protein belongs to the alkB family. As to quaternary structure, interacts with ZFHX3, MLLT3, MLLT1, HSF4, EP300, TES, EIF3C, MTMR6 and PSMA6. Fe(2+) is required as a cofactor. In terms of tissue distribution, widely expressed, with highest expression in pancreas, ovary and spleen.

The protein localises to the cytoplasm. It localises to the nucleus. Its subcellular location is the nucleolus. The protein resides in the midbody. It catalyses the reaction an N(6)-methyl-2'-deoxyadenosine in DNA + 2-oxoglutarate + O2 = a 2'-deoxyadenosine in DNA + formaldehyde + succinate + CO2. The enzyme catalyses N(6)-methyl-L-lysyl-[protein] + 2-oxoglutarate + O2 = L-lysyl-[protein] + formaldehyde + succinate + CO2. Its function is as follows. Dioxygenase that mediates demethylation of actin monomethylated at 'Lys-84' (K84me1), thereby acting as a regulator of actomyosin-processes. Demethylation of actin K84me1 is required for maintaining actomyosin dynamics supporting normal cleavage furrow ingression during cytokinesis and cell migration. In addition to proteins, also demethylates DNA: specifically demethylates DNA methylated on the 6th position of adenine (N(6)-methyladenosine) DNA, thereby regulating Polycomb silencing. The polypeptide is Alpha-ketoglutarate-dependent dioxygenase alkB homolog 4 (Homo sapiens (Human)).